Consider the following 208-residue polypeptide: 3-isopropylmalate dehydratase small subunit 2 (208 aa).

This sequence belongs to the LeuD family. LeuD type 1 subfamily. Heterodimer of LeuC and LeuD.

It carries out the reaction (2R,3S)-3-isopropylmalate = (2S)-2-isopropylmalate. It participates in amino-acid biosynthesis; L-leucine biosynthesis; L-leucine from 3-methyl-2-oxobutanoate: step 2/4. Functionally, catalyzes the isomerization between 2-isopropylmalate and 3-isopropylmalate, via the formation of 2-isopropylmaleate. The protein is 3-isopropylmalate dehydratase small subunit 2 (leuD2) of Salmonella typhimurium (strain LT2 / SGSC1412 / ATCC 700720).